Here is a 470-residue protein sequence, read N- to C-terminus: Carboxypeptidase Q (470 aa).

The signal sequence occupies residues 1–18; it reads MRSLFFLFIVHLLALGSG. The propeptide occupies 19-42; the sequence is KAVFKNGVSQRTFREIKEEIANYE. An N-linked (GlcNAc...) asparagine glycan is attached at Asn59. Zn(2+)-binding residues include His288 and Asp300. Glu334 (nucleophile) is an active-site residue. Glu335 is a Zn(2+) binding site. Asn351 carries an N-linked (GlcNAc...) asparagine glycan. Zn(2+) is bound at residue Asp362. N-linked (GlcNAc...) asparagine glycosylation is present at Asn394. His432 provides a ligand contact to Zn(2+).

This sequence belongs to the peptidase M28 family. Homodimer. The monomeric form is inactive while the homodimer is active. Post-translationally, N-glycosylated. The secreted form is modified by hybrid or complex type oligosaccharide chains.

The protein resides in the endoplasmic reticulum. Its subcellular location is the golgi apparatus. The protein localises to the lysosome. It is found in the secreted. In terms of biological role, carboxypeptidase that may play an important role in the hydrolysis of circulating peptides. Catalyzes the hydrolysis of dipeptides with unsubstituted terminals into amino acids. May play a role in the liberation of thyroxine hormone from its thyroglobulin (Tg) precursor. The chain is Carboxypeptidase Q (Cpq) from Mus musculus (Mouse).